Consider the following 263-residue polypeptide: 4-hydroxy-2-oxo-heptane-1,7-dioate aldolase (263 aa).

The active-site Proton acceptor is H45. Position 147 (Q147) interacts with substrate. An a divalent metal cation-binding site is contributed by E149. Residues A174 and D175 each coordinate substrate. D175 contacts a divalent metal cation.

It belongs to the HpcH/HpaI aldolase family. In terms of assembly, homohexamer; trimer of dimers. It depends on a divalent metal cation as a cofactor.

The catalysed reaction is 4-hydroxy-2-oxoheptanedioate = succinate semialdehyde + pyruvate. The protein operates within aromatic compound metabolism; 4-hydroxyphenylacetate degradation; pyruvate and succinate semialdehyde from 4-hydroxyphenylacetate: step 7/7. Its function is as follows. Catalyzes the reversible retro-aldol cleavage of 4-hydroxy-2-ketoheptane-1,7-dioate (HKHD) to pyruvate and succinic semialdehyde. The polypeptide is 4-hydroxy-2-oxo-heptane-1,7-dioate aldolase (Salmonella newport (strain SL254)).